Here is a 309-residue protein sequence, read N- to C-terminus: 2-phosphoglycerate kinase (309 aa).

Residues Asn5–Pro92 form the ATP-cone domain.

Belongs to the 2-phosphoglycerate kinase family. The cofactor is a divalent metal cation.

The enzyme catalyses (2R)-2-phosphoglycerate + ATP = (2R)-2,3-bisphosphoglycerate + ADP + H(+). The protein operates within thermoadapter biosynthesis; cyclic 2,3-diphosphoglycerate biosynthesis; cyclic 2,3-diphosphoglycerate from 2-phospho-D-glycerate: step 1/2. Its function is as follows. Catalyzes the phosphorylation of 2-phosphoglycerate to 2,3-diphosphoglycerate. Involved in the biosynthesis of cyclic 2,3-bisphosphoglycerate, a thermoprotectant. In Methanocaldococcus jannaschii (strain ATCC 43067 / DSM 2661 / JAL-1 / JCM 10045 / NBRC 100440) (Methanococcus jannaschii), this protein is 2-phosphoglycerate kinase.